A 569-amino-acid polypeptide reads, in one-letter code: Protein Noxp20 (569 aa).

Disordered regions lie at residues 1–87 (MSDD…GEVT), 102–126 (GDTGSEIPLKEQDDAAVDPSSQAGR), and 165–208 (ANSA…GSRG). T197 is modified (phosphothreonine). The residue at position 262 (S262) is a Phosphoserine. Positions 404–439 (VSIDVAKGSEEEEKEEGKEEKAEEPEEDKTGGQGAK) are disordered.

Belongs to the FAM114 family. In terms of tissue distribution, over-expressed in brain. Also detected in lung, stomach, and in a lower extent in testis and thymus.

The protein localises to the cytoplasm. In terms of biological role, may play a role in neuronal cell development. This Mus musculus (Mouse) protein is Protein Noxp20 (Fam114a1).